A 77-amino-acid polypeptide reads, in one-letter code: Acyl carrier protein (77 aa).

Residues 1-76 (MATFDDVKAV…DVVNYIDNLK (76 aa)) enclose the Carrier domain. An O-(pantetheine 4'-phosphoryl)serine modification is found at Ser36.

Belongs to the acyl carrier protein (ACP) family. 4'-phosphopantetheine is transferred from CoA to a specific serine of apo-ACP by AcpS. This modification is essential for activity because fatty acids are bound in thioester linkage to the sulfhydryl of the prosthetic group.

It is found in the cytoplasm. Its pathway is lipid metabolism; fatty acid biosynthesis. Carrier of the growing fatty acid chain in fatty acid biosynthesis. This chain is Acyl carrier protein, found in Campylobacter jejuni subsp. jejuni serotype O:6 (strain 81116 / NCTC 11828).